We begin with the raw amino-acid sequence, 612 residues long: uncharacterized protein (612 aa).

The tract at residues 213 to 238 (ASAEDGEEAAAGAGKRQVARSGARKR) is disordered. Residues 421 to 610 (DLACLLLADL…ERLLQLYRRL (190 aa)) form the VWFA domain.

The protein localises to the cytoplasm. Functionally, component of the anaerobic respiratory chain that transforms nitrate to dinitrogen (denitrification). Function unknown, but essential for the denitrification process. This is an uncharacterized protein from Pseudomonas aeruginosa (strain ATCC 15692 / DSM 22644 / CIP 104116 / JCM 14847 / LMG 12228 / 1C / PRS 101 / PAO1).